The primary structure comprises 540 residues: MQQVLENLTELPSSTGAEEIDLIFLKGIMENPIVKSLAKAHERLEDSKLEAVSDNNLELVNEILEDITPLINVDENVAELVGILKEPHFQSLLEAHDIVASKCYDSPPSSPEMNNSSINNQLLPVDAIRILGIHKRAGEPLGVTFRVENNDLVIARILHGGMIDRQGLLHVGDIIKEVNGHEVGNNPKELQELLKNISGSVTLKILPSYRDTITPQQVFVKCHFDYNPYNDNLIPCKEAGLKFSKGEILQIVNREDPNWWQASHVKEGGSAGLIPSQFLEEKRKAFVRRDWDNSGPFCGTISSKKKKKMMYLTTRNAEFDRHEIQIYEEVAKMPPFQRKTLVLIGAQGVGRRSLKNRFIVLNPTRFGTTVPFTSRKPREDEKDGQAYKFVSRSEMEADIKAGKYLEHGEYEGNLYGTKIDSILEVVQTGRTCILDVNPQALKVLRTSEFMPYVVFIAAPELETLRAMHKAVVDAGITTKLLTDSDLKKTVDESARIQRAYNHYFDLIIINDNLDKAFEKLQTAIEKLRMEPQWVPISWVY.

2 L27 domains span residues 1 to 48 (MQQV…EDSK) and 49 to 107 (LEAV…YDSP). Residues 130-209 (ILGIHKRAGE…SVTLKILPSY (80 aa)) enclose the PDZ domain. Residues 215-284 (PQQVFVKCHF…PSQFLEEKRK (70 aa)) form the SH3 domain. In terms of domain architecture, Guanylate kinase-like spans 338–525 (RKTLVLIGAQ…AFEKLQTAIE (188 aa)). Y500 is subject to Phosphotyrosine.

Belongs to the MAGUK family. In terms of assembly, interacts with CADM1. Interacts with the LIN7 proteins. As to expression, abundant in testis, brain, and kidney with lower levels detectable in other tissues.

Its subcellular location is the membrane. The chain is Protein PALS2 from Homo sapiens (Human).